Reading from the N-terminus, the 722-residue chain is Pentatricopeptide repeat-containing protein At4g14820 (722 aa).

PPR repeat units follow at residues 75–109 (ESIVFNPFLRDLSRSSEPRATILFYQRIRHVGGRL), 110–140 (DQFSFLPILKAVSKVSALFEGMELHGVAFKI), 145–175 (DPFVETGFMDMYASCGRINYARNVFDEMSHR), 176–210 (DVVTWNTMIERYCRFGLVDEAFKLFEEMKDSNVMP), 211–245 (DEMILCNIVSACGRTGNMRYNRAIYEFLIENDVRM), 246–276 (DTHLLTALVTMYAGAGCMDMAREFFRKMSVR), 277–307 (NLFVSTAMVSGYSKCGRLDDAQVIFDQTEKK), 308–342 (DLVCWTTMISAYVESDYPQEALRVFEEMCCSGIKP), 343–377 (DVVSMFSVISACANLGILDKAKWVHSCIHVNGLES), 378–408 (ELSINNALINMYAKCGGLDATRDVFEKMPRR), 409–443 (NVVSWSSMINALSMHGEASDALSLFARMKQENVEP), 444–479 (NEVTFVGVLYGCSHSGLVEEGKKIFASMTDEYNITP), and 480–514 (KLEHYGCMVDLFGRANLLREALEVIESMPVASNVV). The type E motif stretch occupies residues 515 to 590 (IWGSLMSACR…EKGLSRIDQN (76 aa)). The interval 591 to 621 (GKSHEFLIGDKRHKQSNEIYAKLDEVVSKLK) is type E(+) motif. The interval 622-722 (LAGYVPDCGS…NGLCSCRDYW (101 aa)) is type DYW motif.

Belongs to the PPR family. PCMP-H subfamily.

The polypeptide is Pentatricopeptide repeat-containing protein At4g14820 (PCMP-H3) (Arabidopsis thaliana (Mouse-ear cress)).